A 124-amino-acid polypeptide reads, in one-letter code: Small ribosomal subunit protein uS12 (124 aa).

Aspartate 89 is modified (3-methylthioaspartic acid). A disordered region spans residues leucine 102–serine 124. Over residues asparagine 109–serine 124 the composition is skewed to basic residues.

It belongs to the universal ribosomal protein uS12 family. As to quaternary structure, part of the 30S ribosomal subunit. Contacts proteins S8 and S17. May interact with IF1 in the 30S initiation complex.

In terms of biological role, with S4 and S5 plays an important role in translational accuracy. Functionally, interacts with and stabilizes bases of the 16S rRNA that are involved in tRNA selection in the A site and with the mRNA backbone. Located at the interface of the 30S and 50S subunits, it traverses the body of the 30S subunit contacting proteins on the other side and probably holding the rRNA structure together. The combined cluster of proteins S8, S12 and S17 appears to hold together the shoulder and platform of the 30S subunit. This Francisella tularensis subsp. tularensis (strain FSC 198) protein is Small ribosomal subunit protein uS12.